Reading from the N-terminus, the 261-residue chain is Ribosomal RNA small subunit methyltransferase J (261 aa).

Residues 111 to 112, 127 to 128, 163 to 164, and Asp181 each bind S-adenosyl-L-methionine; these read RD, ER, and SS.

Belongs to the methyltransferase superfamily. RsmJ family.

The protein localises to the cytoplasm. It carries out the reaction guanosine(1516) in 16S rRNA + S-adenosyl-L-methionine = N(2)-methylguanosine(1516) in 16S rRNA + S-adenosyl-L-homocysteine + H(+). In terms of biological role, specifically methylates the guanosine in position 1516 of 16S rRNA. The protein is Ribosomal RNA small subunit methyltransferase J of Shewanella sp. (strain MR-4).